A 431-amino-acid polypeptide reads, in one-letter code: MTISGYRKAIWPRRIAVLSVHTSPLEQPGTKDAGGMNVYISQTAVEMARRGVSVEVFTRATSSDQPPAVELAPGVLVRHIPAGPFEPLERGELPSQLCAFTSGVLRTEAFQEPGYYDLIHSHYWLSGQVGWLARDRWGVPLVHTAHTLAKVKNAALASGDTPEPRTRVIGEEQVVAEADRLVVNTDVEADQLVRLYDAAPDAVRTVSPGVDLERFRPGSRAAARAALGVPADAVVLAFAGRIQPLKAPDVLLRATAALVRRDPGLRRRLVVLVAGGPSGSGLEQPRSLMDLAVELGIDDVTRFLPPQGGQDLVNVYRAADVVAVPSHNESFGLVALEAQACGTPVVAARVGGLPVAVDDEVSGLLVPTHDTEDWADALARVALRPEVRAVLSRGAREHAQRFSWRRTTDALLDIYREAMAAFRGTALEVAV.

Histidine 21 is a 1D-myo-inositol 3-phosphate binding site. UDP-N-acetyl-alpha-D-glucosamine-binding positions include 27-28 (QP) and glycine 35. 1D-myo-inositol 3-phosphate contacts are provided by residues 32–37 (DAGGMN), arginine 90, tyrosine 123, threonine 147, and arginine 167. Residues arginine 241, lysine 246, and glutamine 307 each contribute to the UDP-N-acetyl-alpha-D-glucosamine site. Residues tyrosine 316, arginine 317, and alanine 319 each coordinate Mg(2+). UDP-N-acetyl-alpha-D-glucosamine contacts are provided by glutamate 329 and glutamate 337. Position 343 (threonine 343) interacts with Mg(2+).

Belongs to the glycosyltransferase group 1 family. MshA subfamily. As to quaternary structure, homodimer.

The catalysed reaction is 1D-myo-inositol 3-phosphate + UDP-N-acetyl-alpha-D-glucosamine = 1D-myo-inositol 2-acetamido-2-deoxy-alpha-D-glucopyranoside 3-phosphate + UDP + H(+). Its function is as follows. Catalyzes the transfer of a N-acetyl-glucosamine moiety to 1D-myo-inositol 3-phosphate to produce 1D-myo-inositol 2-acetamido-2-deoxy-glucopyranoside 3-phosphate in the mycothiol biosynthesis pathway. The sequence is that of D-inositol 3-phosphate glycosyltransferase from Saccharomonospora viridis (strain ATCC 15386 / DSM 43017 / JCM 3036 / CCUG 5913 / NBRC 12207 / NCIMB 9602 / P101) (Thermoactinomyces viridis).